A 408-amino-acid polypeptide reads, in one-letter code: Peptidase T (408 aa).

H81 is a binding site for Zn(2+). D83 is an active-site residue. D142 lines the Zn(2+) pocket. The active-site Proton acceptor is E176. Residues E177, D199, and H381 each coordinate Zn(2+).

This sequence belongs to the peptidase M20B family. Zn(2+) is required as a cofactor.

It is found in the cytoplasm. The enzyme catalyses Release of the N-terminal residue from a tripeptide.. Functionally, cleaves the N-terminal amino acid of tripeptides. The protein is Peptidase T of Streptococcus gordonii (strain Challis / ATCC 35105 / BCRC 15272 / CH1 / DL1 / V288).